Consider the following 629-residue polypeptide: tRNA uridine 5-carboxymethylaminomethyl modification enzyme MnmG (629 aa).

FAD contacts are provided by residues Gly-13–Gly-18, Val-125, and Ser-180. Residue Gly-273 to Phe-287 participates in NAD(+) binding. Gln-370 contributes to the FAD binding site.

Belongs to the MnmG family. Homodimer. Heterotetramer of two MnmE and two MnmG subunits. The cofactor is FAD.

The protein resides in the cytoplasm. Its function is as follows. NAD-binding protein involved in the addition of a carboxymethylaminomethyl (cmnm) group at the wobble position (U34) of certain tRNAs, forming tRNA-cmnm(5)s(2)U34. In Salmonella dublin (strain CT_02021853), this protein is tRNA uridine 5-carboxymethylaminomethyl modification enzyme MnmG.